A 254-amino-acid polypeptide reads, in one-letter code: Acetyl-coenzyme A carboxylase carboxyl transferase subunit beta (254 aa).

The 254-residue stretch at 1 to 254 folds into the CoA carboxyltransferase N-terminal domain; the sequence is MWLRCPHCHQ…LLKTGSVANE (254 aa). Zn(2+) is bound by residues Cys5, Cys8, Cys23, and Cys26. A C4-type zinc finger spans residues 5-26; that stretch reads CPHCHQLLFAKQLTQYAVCPNC.

The protein belongs to the AccD/PCCB family. Acetyl-CoA carboxylase is a heterohexamer composed of biotin carboxyl carrier protein (AccB), biotin carboxylase (AccC) and two subunits each of ACCase subunit alpha (AccA) and ACCase subunit beta (AccD). It depends on Zn(2+) as a cofactor.

It is found in the cytoplasm. The enzyme catalyses N(6)-carboxybiotinyl-L-lysyl-[protein] + acetyl-CoA = N(6)-biotinyl-L-lysyl-[protein] + malonyl-CoA. The protein operates within lipid metabolism; malonyl-CoA biosynthesis; malonyl-CoA from acetyl-CoA: step 1/1. In terms of biological role, component of the acetyl coenzyme A carboxylase (ACC) complex. Biotin carboxylase (BC) catalyzes the carboxylation of biotin on its carrier protein (BCCP) and then the CO(2) group is transferred by the transcarboxylase to acetyl-CoA to form malonyl-CoA. In Limosilactobacillus reuteri (strain DSM 20016) (Lactobacillus reuteri), this protein is Acetyl-coenzyme A carboxylase carboxyl transferase subunit beta.